The primary structure comprises 44 residues: Cytochrome b559 subunit beta (44 aa).

A helical transmembrane segment spans residues 19–35 (WLAIHGLAIPTVFFLGA). His23 lines the heme pocket.

This sequence belongs to the PsbE/PsbF family. As to quaternary structure, heterodimer of an alpha subunit and a beta subunit. PSII is composed of 1 copy each of membrane proteins PsbA, PsbB, PsbC, PsbD, PsbE, PsbF, PsbH, PsbI, PsbJ, PsbK, PsbL, PsbM, PsbT, PsbX, PsbY, PsbZ, Psb30/Ycf12, at least 3 peripheral proteins of the oxygen-evolving complex and a large number of cofactors. It forms dimeric complexes. Requires heme b as cofactor.

It localises to the plastid. It is found in the chloroplast thylakoid membrane. Functionally, this b-type cytochrome is tightly associated with the reaction center of photosystem II (PSII). PSII is a light-driven water:plastoquinone oxidoreductase that uses light energy to abstract electrons from H(2)O, generating O(2) and a proton gradient subsequently used for ATP formation. It consists of a core antenna complex that captures photons, and an electron transfer chain that converts photonic excitation into a charge separation. The protein is Cytochrome b559 subunit beta of Porphyra purpurea (Red seaweed).